The chain runs to 321 residues: uncharacterized protein (321 aa).

10 helical membrane-spanning segments follow: residues L6–V26, F37–V57, W72–Q92, I100–G120, I134–F154, L160–G180, C196–V216, V223–L243, S255–I275, and G277–L297. EamA domains follow at residues M18–T146 and V175–I300.

It belongs to the EamA transporter family.

The protein resides in the cell membrane. This is an uncharacterized protein from Bacillus subtilis (strain 168).